The following is a 410-amino-acid chain: Zinc finger TRAF-type-containing protein 1 (410 aa).

Gly residues predominate over residues 1 to 13; that stretch reads MSGAEEAGGGGPA. The segment at 1 to 22 is disordered; sequence MSGAEEAGGGGPAAGPAGSVPA. The RING-type; degenerate zinc finger occupies 117–162; the sequence is CTVCLDLPKASVYQCTNGHLMCAGCFIHLLADARLKEEQATCPNCR. The segment at 158-231 adopts a TRAF-type zinc-finger fold; the sequence is CPNCRCEISK…PWHGPFHELT (74 aa).

The protein belongs to the ZFTRAF1 family. As to quaternary structure, interacts with LGALS3.

It localises to the cytoplasm. Its subcellular location is the perinuclear region. The chain is Zinc finger TRAF-type-containing protein 1 from Bos taurus (Bovine).